The sequence spans 251 residues: CDP-diacylglycerol pyrophosphatase (251 aa).

A helical membrane pass occupies residues 4 to 24 (AGLLFLVMIVIAVVAAGIGYW).

It belongs to the Cdh family.

Its subcellular location is the cell inner membrane. The enzyme catalyses a CDP-1,2-diacyl-sn-glycerol + H2O = a 1,2-diacyl-sn-glycero-3-phosphate + CMP + 2 H(+). It participates in phospholipid metabolism; CDP-diacylglycerol degradation; phosphatidate from CDP-diacylglycerol: step 1/1. This is CDP-diacylglycerol pyrophosphatase from Escherichia coli (strain K12 / MC4100 / BW2952).